Reading from the N-terminus, the 205-residue chain is Peptidyl-tRNA hydrolase (205 aa).

Tyr18 is a binding site for tRNA. The active-site Proton acceptor is His23. TRNA contacts are provided by Tyr69, Asn71, and Asn117.

It belongs to the PTH family. As to quaternary structure, monomer.

The protein resides in the cytoplasm. It carries out the reaction an N-acyl-L-alpha-aminoacyl-tRNA + H2O = an N-acyl-L-amino acid + a tRNA + H(+). In terms of biological role, hydrolyzes ribosome-free peptidyl-tRNAs (with 1 or more amino acids incorporated), which drop off the ribosome during protein synthesis, or as a result of ribosome stalling. Catalyzes the release of premature peptidyl moieties from peptidyl-tRNA molecules trapped in stalled 50S ribosomal subunits, and thus maintains levels of free tRNAs and 50S ribosomes. This is Peptidyl-tRNA hydrolase from Synechococcus sp. (strain CC9605).